The sequence spans 131 residues: QRFP-like peptide (131 aa).

Positions methionine 1–alanine 25 are cleaved as a signal peptide. Residues tyrosine 26–arginine 94 constitute a propeptide that is removed on maturation. Residues arginine 48–aspartate 131 form a disordered region. Residues methionine 97 to lysine 106 show a composition bias toward polar residues. A Phenylalanine amide modification is found at phenylalanine 119. The segment covering glycine 120–aspartate 131 has biased composition (basic and acidic residues). Positions glutamate 123 to aspartate 131 are excised as a propeptide.

It belongs to the RFamide neuropeptide family.

It is found in the secreted. Its function is as follows. Ligand for the G-protein coupled receptor QRFPR. This is QRFP-like peptide from Branchiostoma floridae (Florida lancelet).